Consider the following 500-residue polypeptide: L-arabinose isomerase (500 aa).

Mn(2+) is bound by residues E306, E333, H350, and H450.

It belongs to the arabinose isomerase family. In terms of assembly, homohexamer. Requires Mn(2+) as cofactor.

The enzyme catalyses beta-L-arabinopyranose = L-ribulose. It functions in the pathway carbohydrate degradation; L-arabinose degradation via L-ribulose; D-xylulose 5-phosphate from L-arabinose (bacterial route): step 1/3. Catalyzes the conversion of L-arabinose to L-ribulose. The chain is L-arabinose isomerase from Salmonella choleraesuis (strain SC-B67).